Here is a 100-residue protein sequence, read N- to C-terminus: NADH-quinone oxidoreductase subunit K (100 aa).

3 helical membrane passes run 4–24, 28–48, and 60–80; these read LQHGLILAAILFVLGLTGLII, LLFMLISLEVMINAAALAFVV, and VMYILAITLAAAEASIGLALL.

It belongs to the complex I subunit 4L family. As to quaternary structure, NDH-1 is composed of 13 different subunits. Subunits NuoA, H, J, K, L, M, N constitute the membrane sector of the complex.

Its subcellular location is the cell inner membrane. The enzyme catalyses a quinone + NADH + 5 H(+)(in) = a quinol + NAD(+) + 4 H(+)(out). In terms of biological role, NDH-1 shuttles electrons from NADH, via FMN and iron-sulfur (Fe-S) centers, to quinones in the respiratory chain. The immediate electron acceptor for the enzyme in this species is believed to be ubiquinone. Couples the redox reaction to proton translocation (for every two electrons transferred, four hydrogen ions are translocated across the cytoplasmic membrane), and thus conserves the redox energy in a proton gradient. The protein is NADH-quinone oxidoreductase subunit K of Yersinia enterocolitica serotype O:8 / biotype 1B (strain NCTC 13174 / 8081).